The following is a 639-amino-acid chain: Extracellular metalloproteinase mep (639 aa).

The N-terminal stretch at 1–16 (MHMLSFIGALALPVFV) is a signal peptide. A propeptide spanning residues 17–245 (CAQSCEPASL…IHGVVDYISE (229 aa)) is cleaved from the precursor. N-linked (GlcNAc...) asparagine glycosylation is found at Asn287, Asn320, Asn336, and Asn368. His429 contributes to the Zn(2+) binding site. The active site involves Glu430. A Zn(2+)-binding site is contributed by His433. N-linked (GlcNAc...) asparagine glycosylation is present at Asn509.

Belongs to the peptidase M36 family. Requires Zn(2+) as cofactor.

Its subcellular location is the secreted. Its function is as follows. Secreted metalloproteinase that allows assimilation of proteinaceous substrates. This Aspergillus flavus (strain ATCC 200026 / FGSC A1120 / IAM 13836 / NRRL 3357 / JCM 12722 / SRRC 167) protein is Extracellular metalloproteinase mep (mep).